We begin with the raw amino-acid sequence, 385 residues long: 8-amino-7-oxononanoate synthase (385 aa).

Arg23 is a binding site for substrate. 110 to 111 (GF) contributes to the pyridoxal 5'-phosphate binding site. Substrate is bound at residue His135. Pyridoxal 5'-phosphate contacts are provided by Ser180, His208, and Thr234. Lys237 carries the post-translational modification N6-(pyridoxal phosphate)lysine. Position 350 (Thr350) interacts with substrate.

The protein belongs to the class-II pyridoxal-phosphate-dependent aminotransferase family. BioF subfamily. In terms of assembly, homodimer. Pyridoxal 5'-phosphate is required as a cofactor.

The catalysed reaction is 6-carboxyhexanoyl-[ACP] + L-alanine + H(+) = (8S)-8-amino-7-oxononanoate + holo-[ACP] + CO2. It participates in cofactor biosynthesis; biotin biosynthesis. In terms of biological role, catalyzes the decarboxylative condensation of pimeloyl-[acyl-carrier protein] and L-alanine to produce 8-amino-7-oxononanoate (AON), [acyl-carrier protein], and carbon dioxide. In Vibrio vulnificus (strain YJ016), this protein is 8-amino-7-oxononanoate synthase.